An 843-amino-acid polypeptide reads, in one-letter code: Protein P (843 aa).

Residues 1 to 177 are terminal protein domain (TP); the sequence is MPLSYQHFRK…FCGSPYSWEQ (177 aa). Residues 178-346 form a spacer region; the sequence is ELQHGRLVFQ…YCLTHIVNLL (169 aa). 2 disordered regions span residues 224–273 and 288–316; these read GLQP…SSTS and HLST…RSQS. A compositionally biased stretch (polar residues) spans 288-299; that stretch reads HLSTSKRQSSSG. The polymerase/reverse transcriptase domain (RT) stretch occupies residues 347-690; it reads EDWGPCTEHG…YLNLYPVARQ (344 aa). The region spanning 357–600 is the Reverse transcriptase domain; the sequence is EHNIRIPRTP…YSLNFMGYVI (244 aa). Positions 429, 551, and 552 each coordinate Mg(2+).

The protein belongs to the hepadnaviridae P protein family.

The catalysed reaction is DNA(n) + a 2'-deoxyribonucleoside 5'-triphosphate = DNA(n+1) + diphosphate. The enzyme catalyses Endonucleolytic cleavage to 5'-phosphomonoester.. Its activity is regulated as follows. Activated by host HSP70 and HSP40 in vitro to be able to bind the epsilon loop of the pgRNA. Because deletion of the RNase H region renders the protein partly chaperone-independent, the chaperones may be needed indirectly to relieve occlusion of the RNA-binding site by this domain. Inhibited by several reverse-transcriptase inhibitors: Lamivudine, Adefovir and Entecavir. Functionally, multifunctional enzyme that converts the viral RNA genome into dsDNA in viral cytoplasmic capsids. This enzyme displays a DNA polymerase activity that can copy either DNA or RNA templates, and a ribonuclease H (RNase H) activity that cleaves the RNA strand of RNA-DNA heteroduplexes in a partially processive 3'- to 5'-endonucleasic mode. Neo-synthesized pregenomic RNA (pgRNA) are encapsidated together with the P protein, and reverse-transcribed inside the nucleocapsid. Initiation of reverse-transcription occurs first by binding the epsilon loop on the pgRNA genome, and is initiated by protein priming, thereby the 5'-end of (-)DNA is covalently linked to P protein. Partial (+)DNA is synthesized from the (-)DNA template and generates the relaxed circular DNA (RC-DNA) genome. After budding and infection, the RC-DNA migrates in the nucleus, and is converted into a plasmid-like covalently closed circular DNA (cccDNA). The activity of P protein does not seem to be necessary for cccDNA generation, and is presumably released from (+)DNA by host nuclear DNA repair machinery. The polypeptide is Protein P (Homo sapiens (Human)).